Reading from the N-terminus, the 487-residue chain is Bifunctional protein GlmU (487 aa).

Residues 1–232 form a pyrophosphorylase region; it reads MAVIVLAAGA…AAELAGVNDR (232 aa). Residues 6–9, Lys20, Gln77, and 82–83 contribute to the UDP-N-acetyl-alpha-D-glucosamine site; these read LAAG and GT. A Mg(2+)-binding site is contributed by Asp107. Gly142, Glu157, Asn172, and Asn230 together coordinate UDP-N-acetyl-alpha-D-glucosamine. Residue Asn230 coordinates Mg(2+). Residues 233-253 are linker; that stretch reads VQLAAAGAELNRRTVTAAMRG. The interval 254–487 is N-acetyltransferase; it reads GATIVDPATT…PTSTPQADQE (234 aa). UDP-N-acetyl-alpha-D-glucosamine-binding residues include Arg335 and Lys353. Residue His365 is the Proton acceptor of the active site. Residues Tyr368 and Asn379 each coordinate UDP-N-acetyl-alpha-D-glucosamine. Acetyl-CoA contacts are provided by residues Ala382, 388 to 389, Ser407, and Ala425; that span reads NY. The disordered stretch occupies residues 453 to 487; that stretch reads AKKRPGTPAAEAGEAAAKRVAEGGSPTSTPQADQE. Over residues 477-487 the composition is skewed to polar residues; the sequence is SPTSTPQADQE.

In the N-terminal section; belongs to the N-acetylglucosamine-1-phosphate uridyltransferase family. The protein in the C-terminal section; belongs to the transferase hexapeptide repeat family. In terms of assembly, homotrimer. Mg(2+) is required as a cofactor.

It localises to the cytoplasm. The catalysed reaction is alpha-D-glucosamine 1-phosphate + acetyl-CoA = N-acetyl-alpha-D-glucosamine 1-phosphate + CoA + H(+). It catalyses the reaction N-acetyl-alpha-D-glucosamine 1-phosphate + UTP + H(+) = UDP-N-acetyl-alpha-D-glucosamine + diphosphate. It functions in the pathway nucleotide-sugar biosynthesis; UDP-N-acetyl-alpha-D-glucosamine biosynthesis; N-acetyl-alpha-D-glucosamine 1-phosphate from alpha-D-glucosamine 6-phosphate (route II): step 2/2. Its pathway is nucleotide-sugar biosynthesis; UDP-N-acetyl-alpha-D-glucosamine biosynthesis; UDP-N-acetyl-alpha-D-glucosamine from N-acetyl-alpha-D-glucosamine 1-phosphate: step 1/1. The protein operates within bacterial outer membrane biogenesis; LPS lipid A biosynthesis. Its function is as follows. Catalyzes the last two sequential reactions in the de novo biosynthetic pathway for UDP-N-acetylglucosamine (UDP-GlcNAc). The C-terminal domain catalyzes the transfer of acetyl group from acetyl coenzyme A to glucosamine-1-phosphate (GlcN-1-P) to produce N-acetylglucosamine-1-phosphate (GlcNAc-1-P), which is converted into UDP-GlcNAc by the transfer of uridine 5-monophosphate (from uridine 5-triphosphate), a reaction catalyzed by the N-terminal domain. This chain is Bifunctional protein GlmU, found in Corynebacterium jeikeium (strain K411).